We begin with the raw amino-acid sequence, 118 residues long: UPF0449 protein C19orf25 homolog (118 aa).

Tyr-63 carries the phosphotyrosine modification. A coiled-coil region spans residues 69 to 105; that stretch reads YVAMNQRLQQAGAQLEQKRADLQQAGEELERDISQVG.

It belongs to the UPF0449 family.

This chain is UPF0449 protein C19orf25 homolog, found in Bos taurus (Bovine).